A 180-amino-acid polypeptide reads, in one-letter code: Decaprenylphosphoryl-5-phosphoribose phosphatase (180 aa).

4 helical membrane-spanning segments follow: residues 31 to 51 (ALSHFGEHSAGWVALAAAGAL), 61 to 81 (LAVGAGAFLAHAAAVVIKRVV), 116 to 136 (VLLAQTTGVPAPALLVPPMAL), and 139 to 159 (LVLGVHYPTDVVTGVVVGALV).

It belongs to the PA-phosphatase related phosphoesterase family.

Its subcellular location is the cell membrane. The catalysed reaction is trans,octa-cis-decaprenylphospho-beta-D-ribofuranose 5-phosphate + H2O = trans,octa-cis-decaprenylphospho-beta-D-ribofuranose + phosphate. The protein operates within cell wall biogenesis; cell wall polysaccharide biosynthesis. In terms of biological role, phosphatase involved in the biosynthesis of decaprenylphosphoryl arabinose (DPA), which serves as the arabinose donor for the biosynthesis of arabinogalactan, the major mycobacterial cell wall polysaccharide. Catalyzes the dephosphorylation of decaprenylphosphoryl-5-phosphoribose (DPPR) to decaprenyl-phosphoribose (DPR). This is Decaprenylphosphoryl-5-phosphoribose phosphatase from Mycolicibacterium smegmatis (strain ATCC 700084 / mc(2)155) (Mycobacterium smegmatis).